The primary structure comprises 761 residues: Phosphoribosylformylglycinamidine synthase subunit PurL (761 aa).

Positions 1–16 are enriched in low complexity; it reads MTGNPAAPAATSVSPP. The segment at 1–21 is disordered; the sequence is MTGNPAAPAATSVSPPAEQPY. Residue H57 is part of the active site. ATP is bound by residues Y60 and K101. E103 contributes to the Mg(2+) binding site. Substrate contacts are provided by residues 104–107 and R126; that span reads SHNH. The active-site Proton acceptor is the H105. A Mg(2+)-binding site is contributed by D127. Q252 lines the substrate pocket. D280 is a binding site for Mg(2+). Residue 329-331 participates in substrate binding; it reads ESQ. Residues N519 and G556 each contribute to the ATP site. N557 lines the Mg(2+) pocket. Substrate is bound at residue S559.

The protein belongs to the FGAMS family. Monomer. Part of the FGAM synthase complex composed of 1 PurL, 1 PurQ and 2 PurS subunits.

The protein localises to the cytoplasm. It catalyses the reaction N(2)-formyl-N(1)-(5-phospho-beta-D-ribosyl)glycinamide + L-glutamine + ATP + H2O = 2-formamido-N(1)-(5-O-phospho-beta-D-ribosyl)acetamidine + L-glutamate + ADP + phosphate + H(+). The protein operates within purine metabolism; IMP biosynthesis via de novo pathway; 5-amino-1-(5-phospho-D-ribosyl)imidazole from N(2)-formyl-N(1)-(5-phospho-D-ribosyl)glycinamide: step 1/2. In terms of biological role, part of the phosphoribosylformylglycinamidine synthase complex involved in the purines biosynthetic pathway. Catalyzes the ATP-dependent conversion of formylglycinamide ribonucleotide (FGAR) and glutamine to yield formylglycinamidine ribonucleotide (FGAM) and glutamate. The FGAM synthase complex is composed of three subunits. PurQ produces an ammonia molecule by converting glutamine to glutamate. PurL transfers the ammonia molecule to FGAR to form FGAM in an ATP-dependent manner. PurS interacts with PurQ and PurL and is thought to assist in the transfer of the ammonia molecule from PurQ to PurL. In Frankia casuarinae (strain DSM 45818 / CECT 9043 / HFP020203 / CcI3), this protein is Phosphoribosylformylglycinamidine synthase subunit PurL.